Consider the following 1520-residue polypeptide: Myosin-5 (1520 aa).

Positions 7-56 constitute a Myosin N-terminal SH3-like domain; sequence IVGSHVWVEDPHLAWIDGEVTRIDGINVHVKTKKGKTVVTNVYFPKDTEA. Positions 59-729 constitute a Myosin motor domain; that stretch reads GGVDDMTKLS…QMAELDARRA (671 aa). Residues 153-160 and 206-214 contribute to the ATP site; these read GESGAGKT and NNNSSRFGK. Actin-binding regions lie at residues 492–526, 528–551, 586–610, and 610–632; these read LIEK…FQTF, EHER…AGEV, FHAL…KQQL, and LHSL…KPNN. IQ domains are found at residues 732–761, 755–784, 780–809, 803–832, 828–857, and 851–880; these read LGNA…AAIV, IRNA…EAAA, IEAA…STIV, TRSS…RKAA, QRKA…AAIV, and LQKA…AARD. Positions 881 to 1047 form a coiled coil; it reads TGALKDAKNK…ESENKVLRQQ (167 aa). Positions 1062 to 1100 are disordered; the sequence is PKTTIIQRTPEKDTFSNGETTQLQEPETEDRPQKSLNQK. A compositionally biased stretch (polar residues) spans 1076–1086; sequence FSNGETTQLQE. The 316-residue stretch at 1148–1463 folds into the Dilute domain; sequence NRIIETIASA…IATMRAEVSD (316 aa).

It belongs to the TRAFAC class myosin-kinesin ATPase superfamily. Myosin family. Plant myosin class XI subfamily. In terms of assembly, homodimer. Interacts with MYOB1 and MYOB2. Interacts with PHOX1.

The protein resides in the cytoplasm. Functionally, myosin heavy chain that is required for the cell cycle-regulated transport of various organelles and proteins for their segregation. Functions by binding with its tail domain to receptor proteins on organelles and exerting force with its N-terminal motor domain against actin filaments, thereby transporting its cargo along polarized actin cables. Contributes to the trafficking of Golgi stacks, mitochondria and peroxisomes. Required for development of pavement cells, trichomes, and stigmatic papillae. The chain is Myosin-5 (XI-1) from Arabidopsis thaliana (Mouse-ear cress).